The primary structure comprises 373 residues: Chorismate synthase (373 aa).

Arg-46 is a binding site for NADP(+). Residues 123–125 (RSS), 251–252 (NA), Gly-295, 310–314 (KPTPS), and Arg-337 contribute to the FMN site.

It belongs to the chorismate synthase family. FMNH2 serves as cofactor.

The enzyme catalyses 5-O-(1-carboxyvinyl)-3-phosphoshikimate = chorismate + phosphate. Its pathway is metabolic intermediate biosynthesis; chorismate biosynthesis; chorismate from D-erythrose 4-phosphate and phosphoenolpyruvate: step 7/7. Its function is as follows. Catalyzes the anti-1,4-elimination of the C-3 phosphate and the C-6 proR hydrogen from 5-enolpyruvylshikimate-3-phosphate (EPSP) to yield chorismate, which is the branch point compound that serves as the starting substrate for the three terminal pathways of aromatic amino acid biosynthesis. This reaction introduces a second double bond into the aromatic ring system. This Methanococcus maripaludis (strain DSM 14266 / JCM 13030 / NBRC 101832 / S2 / LL) protein is Chorismate synthase.